A 301-amino-acid polypeptide reads, in one-letter code: Peptidyl-prolyl isomerase CWC27 (301 aa).

Positions 9–159 (TTAKCILYTT…YPAVLKDVEI (151 aa)) constitute a PPIase cyclophilin-type domain. Positions 251-280 (TELHDNVDEATTKETESQENIKEEPMDKRE) are disordered.

The protein belongs to the cyclophilin-type PPIase family. CWC27 subfamily. Belongs to the CWC complex (or CEF1-associated complex), a spliceosome subcomplex composed of the U2, U5 and U6 snRNAs and at least BUD13, BUD31, BRR2, CDC40, CEF1, CLF1, CUS1, CWC2, CWC15, CWC21, CWC22, CWC23, CWC24, CWC25, CWC27, ECM2, HSH155, IST3, ISY1, LEA1, MSL1, NTC20, PRP8, PRP9, PRP11, PRP19, PRP21, PRP22, PRP45, PRP46, SLU7, SMB1, SMD1, SMD2, SMD3, SMX2, SMX3, SNT309, SNU114, SPP2, SYF1, SYF2, RSE1 and YJU2.

The protein localises to the cytoplasm. The protein resides in the nucleus. It catalyses the reaction [protein]-peptidylproline (omega=180) = [protein]-peptidylproline (omega=0). Its function is as follows. PPIases accelerate the folding of proteins. Catalyzes the cis-trans isomerization of proline imidic peptide bonds in oligopeptides. Involved in pre-mRNA splicing. This Saccharomyces cerevisiae (strain ATCC 204508 / S288c) (Baker's yeast) protein is Peptidyl-prolyl isomerase CWC27 (CWC27).